The primary structure comprises 270 residues: Regulatory protein RecX (270 aa).

The protein belongs to the RecX family.

It localises to the cytoplasm. Its function is as follows. Modulates RecA activity. This chain is Regulatory protein RecX, found in Bacillus cereus (strain 03BB102).